The primary structure comprises 342 residues: N-acetyl-gamma-glutamyl-phosphate reductase (342 aa).

The active site involves Cys149.

Belongs to the NAGSA dehydrogenase family. Type 1 subfamily.

The protein resides in the cytoplasm. It catalyses the reaction N-acetyl-L-glutamate 5-semialdehyde + phosphate + NADP(+) = N-acetyl-L-glutamyl 5-phosphate + NADPH + H(+). It participates in amino-acid biosynthesis; L-arginine biosynthesis; N(2)-acetyl-L-ornithine from L-glutamate: step 3/4. Its function is as follows. Catalyzes the NADPH-dependent reduction of N-acetyl-5-glutamyl phosphate to yield N-acetyl-L-glutamate 5-semialdehyde. In Ruegeria pomeroyi (strain ATCC 700808 / DSM 15171 / DSS-3) (Silicibacter pomeroyi), this protein is N-acetyl-gamma-glutamyl-phosphate reductase.